Consider the following 276-residue polypeptide: Protein canopy homolog 3 (276 aa).

The signal sequence occupies residues 1 to 16 (MNVFISVVLFLGSARA). One can recognise a Saposin B-type domain in the interval 30–269 (NKCEVCKFVS…EEEIQKKVPL (240 aa)). 3 disulfides stabilise this stretch: cysteine 32/cysteine 190, cysteine 35/cysteine 178, and cysteine 88/cysteine 150. Positions 137 to 162 (NETSAEVADLKKQCDVMVEQYEDVIE) form a coiled coil. Positions 206–276 (AEDKKKKKGK…VPLNQPKTEL (71 aa)) are disordered. Basic residues-rich tracts occupy residues 210–219 (KKKKGKKKKG) and 228–239 (KEKKVKKKKKKS). Basic and acidic residues predominate over residues 240–252 (KISDSESSKRRME).

The protein belongs to the canopy family.

Its subcellular location is the endoplasmic reticulum. Its function is as follows. Toll-like receptor (TLR)-specific co-chaperone for HSP90B1. Required for proper TLR folding and hence controls TLR exit from the endoplasmic reticulum. Consequently, required for immune responses. The sequence is that of Protein canopy homolog 3 (cnpy3) from Danio rerio (Zebrafish).